We begin with the raw amino-acid sequence, 219 residues long: Membrin-12 (219 aa).

An N-acetylalanine modification is found at Ala-2. Topologically, residues 2–197 (ASGTVGGLSE…LIERRNRVDT (196 aa)) are cytoplasmic. Residues 198–215 (WIKYAGMIATLVILYLFI) traverse the membrane as a helical; Anchor for type IV membrane protein segment. The Vesicular segment spans residues 216 to 219 (RWTR).

The protein belongs to the GOSR2 family.

The protein localises to the golgi apparatus membrane. Involved in transport of proteins from the cis/medial-Golgi to the trans-Golgi network. This Arabidopsis thaliana (Mouse-ear cress) protein is Membrin-12 (MEMB12).